Here is a 168-residue protein sequence, read N- to C-terminus: ATP synthase subunit b (168 aa).

A helical membrane pass occupies residues 9 to 29; sequence AIPFGTIAYTLFIFLLLLVML.

The protein belongs to the ATPase B chain family. In terms of assembly, F-type ATPases have 2 components, F(1) - the catalytic core - and F(0) - the membrane proton channel. F(1) has five subunits: alpha(3), beta(3), gamma(1), delta(1), epsilon(1). F(0) has three main subunits: a(1), b(2) and c(10-14). The alpha and beta chains form an alternating ring which encloses part of the gamma chain. F(1) is attached to F(0) by a central stalk formed by the gamma and epsilon chains, while a peripheral stalk is formed by the delta and b chains.

The protein localises to the cell membrane. F(1)F(0) ATP synthase produces ATP from ADP in the presence of a proton or sodium gradient. F-type ATPases consist of two structural domains, F(1) containing the extramembraneous catalytic core and F(0) containing the membrane proton channel, linked together by a central stalk and a peripheral stalk. During catalysis, ATP synthesis in the catalytic domain of F(1) is coupled via a rotary mechanism of the central stalk subunits to proton translocation. In terms of biological role, component of the F(0) channel, it forms part of the peripheral stalk, linking F(1) to F(0). This chain is ATP synthase subunit b, found in Bacillus cereus (strain ATCC 10987 / NRS 248).